A 59-amino-acid polypeptide reads, in one-letter code: Insulin (59 aa).

3 disulfide bridges follow: C7-C45, C19-C58, and C44-C49.

Belongs to the insulin family. Heterodimer of a B chain and an A chain linked by two disulfide bonds.

Its subcellular location is the secreted. Its function is as follows. Insulin decreases blood glucose concentration. It increases cell permeability to monosaccharides, amino acids and fatty acids. It accelerates glycolysis, the pentose phosphate cycle, and glycogen synthesis in liver. This chain is Insulin (ins), found in Chimaera monstrosa (Rabbit fish).